Reading from the N-terminus, the 71-residue chain is Exodeoxyribonuclease 7 small subunit (71 aa).

Belongs to the XseB family. As to quaternary structure, heterooligomer composed of large and small subunits.

Its subcellular location is the cytoplasm. It carries out the reaction Exonucleolytic cleavage in either 5'- to 3'- or 3'- to 5'-direction to yield nucleoside 5'-phosphates.. Functionally, bidirectionally degrades single-stranded DNA into large acid-insoluble oligonucleotides, which are then degraded further into small acid-soluble oligonucleotides. This Streptococcus agalactiae serotype Ia (strain ATCC 27591 / A909 / CDC SS700) protein is Exodeoxyribonuclease 7 small subunit.